Consider the following 212-residue polypeptide: Golgi SNAP receptor complex member 2 (212 aa).

Met-1 is modified (N-acetylmethionine). The Cytoplasmic portion of the chain corresponds to 1-190; it reads MEPLYQQTHK…LIEKRAFQDK (190 aa). Residues 61–107 adopt a coiled-coil conformation; that stretch reads NRRQNAKLRVDQLKYDVQHLQTALRNFQHRRQAKEQQERQRDELLSR. Positions 118–120 match the IxM motif; signal for cargo packaging into COPII-coated vesicles motif; it reads IPM. Residues 191–211 traverse the membrane as a helical; Anchor for type IV membrane protein segment; that stretch reads YFMIGGMLLTCAVMFLVVQYL. Residue Thr-212 is a topological domain, vesicular.

This sequence belongs to the GOSR2 family. As to quaternary structure, part of a unique SNARE complex composed of the Golgi SNAREs GOSR1, STX5 and YKT6. Interacts with BET1.

It localises to the golgi apparatus. The protein resides in the cis-Golgi network membrane. It is found in the golgi apparatus membrane. Its subcellular location is the endoplasmic reticulum membrane. Its function is as follows. Involved in transport of proteins from the cis/medial-Golgi to the trans-Golgi network. The polypeptide is Golgi SNAP receptor complex member 2 (Gosr2) (Rattus norvegicus (Rat)).